A 421-amino-acid polypeptide reads, in one-letter code: Ankyrin repeat and SOCS box protein 6 (421 aa).

ANK repeat units follow at residues 67-97 (EGVSNALLKMAELGLTRAADVLLRHGANLNF), 102-131 (TYYTALHIAVLRNQPDMVELLVHHGADVNR), 136-166 (HESSPLDLASEEPERLPCLQRLLDLGADVNA), 170-205 (HGKTALLHALASSDGVQIHNTENIRLLLEGGADVKA), 226-255 (GGDKEEAQMINRFCFQVTRLLLAHGADPSE), and 260-289 (ESLTHICLKSFKLHFPLLRFLLESGAAYNC). In terms of domain architecture, SOCS box spans 360–415 (ALHFSLRQLESYPPPLKHLCRVAIRLYLQPWPVDVKVKALPLPDRLKWYLLSEHSG).

Belongs to the ankyrin SOCS box (ASB) family. Binds APS. Identified in a complex with ELOB and ELOC. Interacts with CUL5 and RNF7. Interacts with SQSTM1. Ubiquitinated by RNF41; leading to proteasomal degradation.

The protein resides in the cytoplasm. The protein operates within protein modification; protein ubiquitination. Functionally, probable substrate-recognition component of a SCF-like ECS (Elongin-Cullin-SOCS-box protein) E3 ubiquitin-protein ligase complex which mediates the ubiquitination and subsequent proteasomal degradation of target proteins. May play a role in the regulation of cell proliferation and autophagy by promoting the ubiquitination and degradation of SQSTM1. This is Ankyrin repeat and SOCS box protein 6 (ASB6) from Homo sapiens (Human).